A 320-amino-acid chain; its full sequence is Ferrochelatase (320 aa).

Fe cation is bound by residues His-194 and Glu-275.

It belongs to the ferrochelatase family. As to quaternary structure, monomer.

The protein resides in the cytoplasm. It catalyses the reaction heme b + 2 H(+) = protoporphyrin IX + Fe(2+). Its pathway is porphyrin-containing compound metabolism; protoheme biosynthesis; protoheme from protoporphyrin-IX: step 1/1. Catalyzes the ferrous insertion into protoporphyrin IX. The chain is Ferrochelatase from Escherichia coli O127:H6 (strain E2348/69 / EPEC).